A 396-amino-acid polypeptide reads, in one-letter code: Phosphoglycerate kinase (396 aa).

Substrate contacts are provided by residues 23-25, R38, 61-64, R122, and R155; these read DFN and HMGK. ATP-binding positions include K206, G296, E327, and 353 to 356; that span reads GGDS.

It belongs to the phosphoglycerate kinase family. As to quaternary structure, monomer.

Its subcellular location is the cytoplasm. The enzyme catalyses (2R)-3-phosphoglycerate + ATP = (2R)-3-phospho-glyceroyl phosphate + ADP. Its pathway is carbohydrate degradation; glycolysis; pyruvate from D-glyceraldehyde 3-phosphate: step 2/5. In Clostridium botulinum (strain Alaska E43 / Type E3), this protein is Phosphoglycerate kinase.